The chain runs to 51 residues: Sperm protamine P1 (51 aa).

Low complexity predominate over residues 1–13 (MARYRCCRSQSRS). The segment at 1–30 (MARYRCCRSQSRSRYYRQRQRSRRRRRRSC) is disordered. Residues 14–30 (RYYRQRQRSRRRRRRSC) are compositionally biased toward basic residues. A disulfide bridge connects residues Cys-40 and Cys-48.

Belongs to the protamine P1 family. As to quaternary structure, cross-linked by interchain disulfide bonds around the DNA-helix. In terms of processing, phosphorylated by SRPK1. In terms of tissue distribution, testis.

It is found in the nucleus. It localises to the chromosome. Functionally, protamines substitute for histones in the chromatin of sperm during the haploid phase of spermatogenesis. They compact sperm DNA into a highly condensed, stable and inactive complex. The protein is Sperm protamine P1 (PRM1) of Homo sapiens (Human).